The sequence spans 178 residues: ATP synthase subunit delta (178 aa).

The protein belongs to the ATPase delta chain family. In terms of assembly, F-type ATPases have 2 components, F(1) - the catalytic core - and F(0) - the membrane proton channel. F(1) has five subunits: alpha(3), beta(3), gamma(1), delta(1), epsilon(1). F(0) has three main subunits: a(1), b(2) and c(10-14). The alpha and beta chains form an alternating ring which encloses part of the gamma chain. F(1) is attached to F(0) by a central stalk formed by the gamma and epsilon chains, while a peripheral stalk is formed by the delta and b chains.

Its subcellular location is the cell membrane. F(1)F(0) ATP synthase produces ATP from ADP in the presence of a proton or sodium gradient. F-type ATPases consist of two structural domains, F(1) containing the extramembraneous catalytic core and F(0) containing the membrane proton channel, linked together by a central stalk and a peripheral stalk. During catalysis, ATP synthesis in the catalytic domain of F(1) is coupled via a rotary mechanism of the central stalk subunits to proton translocation. Functionally, this protein is part of the stalk that links CF(0) to CF(1). It either transmits conformational changes from CF(0) to CF(1) or is implicated in proton conduction. The sequence is that of ATP synthase subunit delta from Streptococcus pyogenes serotype M2 (strain MGAS10270).